Here is a 237-residue protein sequence, read N- to C-terminus: Opacity protein opA57 (237 aa).

Ala-1 is a signal peptide.

Belongs to the opacity porin family.

The protein resides in the cell outer membrane. Its function is as follows. Implicated in a number of adherence functions. OPA proteins are implicated in pathogenesis and are subject to phase variation. The chain is Opacity protein opA57 (opaK) from Neisseria gonorrhoeae.